A 233-amino-acid polypeptide reads, in one-letter code: Cytochrome c biogenesis ATP-binding export protein CcmA (233 aa).

The region spanning 17–233 is the ABC transporter domain; that stretch reads FAGEDLLCVR…AAGLFLEDEG (217 aa). 49 to 56 is an ATP binding site; the sequence is GPNGSGKS.

This sequence belongs to the ABC transporter superfamily. CcmA exporter (TC 3.A.1.107) family. In terms of assembly, the complex is composed of two ATP-binding proteins (CcmA) and two transmembrane proteins (CcmB).

Its subcellular location is the cell inner membrane. The catalysed reaction is heme b(in) + ATP + H2O = heme b(out) + ADP + phosphate + H(+). Functionally, part of the ABC transporter complex CcmAB involved in the biogenesis of c-type cytochromes; once thought to export heme, this seems not to be the case, but its exact role is uncertain. Responsible for energy coupling to the transport system. The protein is Cytochrome c biogenesis ATP-binding export protein CcmA of Rhodospirillum rubrum (strain ATCC 11170 / ATH 1.1.1 / DSM 467 / LMG 4362 / NCIMB 8255 / S1).